An 814-amino-acid chain; its full sequence is MKEFPKHYNFTENEKKWQNIWQELQIYAYDPNISKAEIYIVDTPPPTVSGQLHIGHIYSYTQTDFIVRFQRMIGKNIFYPIGFDDNGLPTERLVEKQKQIKAYNMERDEFIKICLEVVKNEEAKFRSLFKQIALSVDWSLEYQTISPLSRKISQMSFLDLLHKGEVYRANQPILWDTVDGTALAQADIEDKQKISSMNYITFKTEQGDQLTIATTRPELLPACVAVFYHPDDVRYKHLADKSAITPLFNEKVPILADPLVQQDKGTGLVMCCTFGDQTDITWWKSHNLPLKTIITKKGTINFPHKLDIDGLTIKEARTKIIDILKEQSLLTKQEEIIQTVKCAERSGAPLEILTVTQWFIKTITHKEALLKRTNELNWYPKNMKMRLENWINSLSWDWCISRQRYFGVPFPIWYSKRIGEEGKILYADISQLPVDPLKDLPIGYSKEEVDPDLDVMDTWATSSVSPQLSTYGISEDLAINKVRHDKLFPMDLRPQAHEIIRTWAFYTILKSHLHQNILPWKNIMVSGWCLAEDRSKMSKSKGNVLVPEKLLERYGADVIRYWSANSKLGADTAYSEDVMKNGKRLVNKLWNAAKFVSIHFDKLTSEDKKVSLFDIKEKITNEFDQWMINKLVALVKLATNALQNYEYANAIYLTEKFFWSIFCDNYLEISKTRSYDEANKNPQGQYSSILTLYHIMQTLLKLFAPFMPHITEELYQILYNKNSIHMQGNWINYGDLNYEIDVQGPEGLLEILDIVRKFKAEYNLSIKAPIKLLEVSGIVLSTELVEDLKNVTSAEEIQFKAKDDQIKVNIKLFV.

The 'HIGH' region motif lies at 46–56 (PTVSGQLHIGH). The 'KMSKS' region motif lies at 536 to 540 (KMSKS). Residue Lys539 participates in ATP binding.

The protein belongs to the class-I aminoacyl-tRNA synthetase family. ValS type 2 subfamily. Monomer.

It localises to the cytoplasm. The catalysed reaction is tRNA(Val) + L-valine + ATP = L-valyl-tRNA(Val) + AMP + diphosphate. Functionally, catalyzes the attachment of valine to tRNA(Val). As ValRS can inadvertently accommodate and process structurally similar amino acids such as threonine, to avoid such errors, it has a 'posttransfer' editing activity that hydrolyzes mischarged Thr-tRNA(Val) in a tRNA-dependent manner. This is Valine--tRNA ligase from Rickettsia prowazekii (strain Madrid E).